The chain runs to 365 residues: 5-hydroxytryptamine receptor 1E (365 aa).

Residues 1-21 are Extracellular-facing; it reads MNITNCTTEASMAIRPKTITE. Residues Asn2 and Asn5 are each glycosylated (N-linked (GlcNAc...) asparagine). Residues 22–45 form a helical membrane-spanning segment; it reads KMLICMTLVVITTLTTLLNLAVIM. Topologically, residues 46-59 are cytoplasmic; it reads AIGTTKKLHQPANY. Residues 60–84 traverse the membrane as a helical segment; sequence LICSLAVTDLLVAVLVMPLSIIYIV. Over 85 to 92 the chain is Extracellular; sequence MDRWKLGY. The chain crosses the membrane as a helical span at residues 93–118; the sequence is FLCEVWLSVDMTCCTCSILHLCVIAL. Cysteines 95 and 173 form a disulfide. Serotonin contacts are provided by Asp102 and Cys106. The DRY motif; important for ligand-induced conformation changes motif lies at 119 to 121; that stretch reads DRY. Residues 119-138 are Cytoplasmic-facing; the sequence is DRYWAITNAIEYARKRTAKR. The chain crosses the membrane as a helical span at residues 139 to 157; that stretch reads AALMILTVWTISIFISMPP. Topologically, residues 158-179 are extracellular; that stretch reads LFWRSHRRLSPPPSQCTIQHDH. A helical transmembrane segment spans residues 180-203; sequence VIYTIYSTLGAFYIPLTLILILYY. Over 204-291 the chain is Cytoplasmic; that stretch reads RIYHAAKSLY…SSTRERKAAR (88 aa). The chain crosses the membrane as a helical span at residues 292-316; that stretch reads ILGLILGAFILSWLPFFIKELIVGL. At 317–322 the chain is on the extracellular side; it reads SIYTVS. A helical membrane pass occupies residues 323–345; the sequence is SEVADFLTWLGYVNSLINPLLYT. The NPxxY motif; important for ligand-induced conformation changes and signaling signature appears at 340–344; sequence NPLLY. Residues 346–365 lie on the Cytoplasmic side of the membrane; the sequence is SFNEDFKLAFKKLIRCREHT.

It belongs to the G-protein coupled receptor 1 family. In terms of tissue distribution, detected in brain.

The protein resides in the cell membrane. G-protein coupled receptor for 5-hydroxytryptamine (serotonin). Also functions as a receptor for various alkaloids and psychoactive substances. Ligand binding causes a conformation change that triggers signaling via guanine nucleotide-binding proteins (G proteins) and modulates the activity of downstream effectors, such as adenylate cyclase. HTR1E is coupled to G(i)/G(o) G alpha proteins and mediates inhibitory neurotransmission by inhibiting adenylate cyclase activity. The chain is 5-hydroxytryptamine receptor 1E from Homo sapiens (Human).